The following is a 239-amino-acid chain: Ribosomal RNA small subunit methyltransferase G (239 aa).

Residues Gly79, Phe84, 130–131 (AE), and Arg149 contribute to the S-adenosyl-L-methionine site. Positions 218 to 239 (KKTKTPKKYPRQAGTPSKKPIS) are disordered.

This sequence belongs to the methyltransferase superfamily. RNA methyltransferase RsmG family.

It localises to the cytoplasm. Specifically methylates the N7 position of a guanine in 16S rRNA. The sequence is that of Ribosomal RNA small subunit methyltransferase G from Leuconostoc mesenteroides subsp. mesenteroides (strain ATCC 8293 / DSM 20343 / BCRC 11652 / CCM 1803 / JCM 6124 / NCDO 523 / NBRC 100496 / NCIMB 8023 / NCTC 12954 / NRRL B-1118 / 37Y).